The sequence spans 253 residues: 3-deoxy-manno-octulosonate cytidylyltransferase (253 aa).

It belongs to the KdsB family.

The protein localises to the cytoplasm. The catalysed reaction is 3-deoxy-alpha-D-manno-oct-2-ulosonate + CTP = CMP-3-deoxy-beta-D-manno-octulosonate + diphosphate. Its pathway is nucleotide-sugar biosynthesis; CMP-3-deoxy-D-manno-octulosonate biosynthesis; CMP-3-deoxy-D-manno-octulosonate from 3-deoxy-D-manno-octulosonate and CTP: step 1/1. It functions in the pathway bacterial outer membrane biogenesis; lipopolysaccharide biosynthesis. In terms of biological role, activates KDO (a required 8-carbon sugar) for incorporation into bacterial lipopolysaccharide in Gram-negative bacteria. The protein is 3-deoxy-manno-octulosonate cytidylyltransferase of Geotalea daltonii (strain DSM 22248 / JCM 15807 / FRC-32) (Geobacter daltonii).